Consider the following 418-residue polypeptide: UDP-N-acetylglucosamine 1-carboxyvinyltransferase (418 aa).

22 to 23 contacts phosphoenolpyruvate; sequence KN. Arginine 91 contacts UDP-N-acetyl-alpha-D-glucosamine. Cysteine 115 functions as the Proton donor in the catalytic mechanism. The residue at position 115 (cysteine 115) is a 2-(S-cysteinyl)pyruvic acid O-phosphothioketal. UDP-N-acetyl-alpha-D-glucosamine contacts are provided by aspartate 305 and isoleucine 327.

This sequence belongs to the EPSP synthase family. MurA subfamily.

The protein localises to the cytoplasm. The enzyme catalyses phosphoenolpyruvate + UDP-N-acetyl-alpha-D-glucosamine = UDP-N-acetyl-3-O-(1-carboxyvinyl)-alpha-D-glucosamine + phosphate. Its pathway is cell wall biogenesis; peptidoglycan biosynthesis. Cell wall formation. Adds enolpyruvyl to UDP-N-acetylglucosamine. This chain is UDP-N-acetylglucosamine 1-carboxyvinyltransferase, found in Aeromonas hydrophila subsp. hydrophila (strain ATCC 7966 / DSM 30187 / BCRC 13018 / CCUG 14551 / JCM 1027 / KCTC 2358 / NCIMB 9240 / NCTC 8049).